Consider the following 131-residue polypeptide: Ribosome-binding factor A (131 aa).

Belongs to the RbfA family. As to quaternary structure, monomer. Binds 30S ribosomal subunits, but not 50S ribosomal subunits or 70S ribosomes.

The protein localises to the cytoplasm. In terms of biological role, one of several proteins that assist in the late maturation steps of the functional core of the 30S ribosomal subunit. Associates with free 30S ribosomal subunits (but not with 30S subunits that are part of 70S ribosomes or polysomes). Required for efficient processing of 16S rRNA. May interact with the 5'-terminal helix region of 16S rRNA. This Protochlamydia amoebophila (strain UWE25) protein is Ribosome-binding factor A.